The following is a 199-amino-acid chain: Fe/S biogenesis protein NfuA (199 aa).

The [4Fe-4S] cluster site is built by cysteine 151 and cysteine 154.

This sequence belongs to the NfuA family. Homodimer. [4Fe-4S] cluster is required as a cofactor.

Involved in iron-sulfur cluster biogenesis. Binds a 4Fe-4S cluster, can transfer this cluster to apoproteins, and thereby intervenes in the maturation of Fe/S proteins. Could also act as a scaffold/chaperone for damaged Fe/S proteins. This is Fe/S biogenesis protein NfuA from Xylella fastidiosa (strain M12).